A 1185-amino-acid chain; its full sequence is 1-phosphatidylinositol 4,5-bisphosphate phosphodiesterase beta-2 (1185 aa).

The region spanning 312–463 (HDMTQPLNHY…LRGKILIKNK (152 aa)) is the PI-PLC X-box domain. Residue H327 is part of the active site. Ca(2+)-binding residues include N328, E357, and D359. H374 is a catalytic residue. E408 is a Ca(2+) binding site. The tract at residues 460 to 533 (IKNKKNQFSG…EEIKKMQSDE (74 aa)) is disordered. A compositionally biased stretch (polar residues) spans 465–476 (NQFSGPTSSSKD). A compositionally biased stretch (acidic residues) spans 501–524 (EGTELEEEEVEEEEEEESGNLDEE). The PI-PLC Y-box domain occupies 546 to 662 (MSSLVNYIQP…GYLLKHEFMR (117 aa)). One can recognise a C2 domain in the interval 662 to 790 (RRPDKQFNPF…CLHSESNMPL (129 aa)). Disordered stretches follow at residues 859-888 (LAPT…RTAS) and 943-979 (GACK…VDGR). Over residues 872–888 (GAREEAMKEAAEPRTAS) the composition is skewed to basic and acidic residues. The residue at position 953 (S953) is a Phosphoserine. Residues 988–1147 (ELELLRQGEE…VKESVRACLR (160 aa)) are a coiled coil.

Interacts with RAC1. Forms a complex composed of at least WDR26, a G-beta:gamma unit, and PLCB2. The cofactor is Ca(2+).

The catalysed reaction is a 1,2-diacyl-sn-glycero-3-phospho-(1D-myo-inositol-4,5-bisphosphate) + H2O = 1D-myo-inositol 1,4,5-trisphosphate + a 1,2-diacyl-sn-glycerol + H(+). The enzyme catalyses a 1,2-diacyl-sn-glycero-3-phospho-(1D-myo-inositol) + H2O = 1D-myo-inositol 1-phosphate + a 1,2-diacyl-sn-glycerol + H(+). Functionally, the production of the second messenger molecules diacylglycerol (DAG) and inositol 1,4,5-trisphosphate (IP3) is mediated by activated phosphatidylinositol-specific phospholipase C enzymes. In neutrophils, participates in a phospholipase C-activating N-formyl peptide-activated GPCR (G protein-coupled receptor) signaling pathway by promoting RASGRP4 activation by DAG, to promote neutrophil functional responses. The chain is 1-phosphatidylinositol 4,5-bisphosphate phosphodiesterase beta-2 from Homo sapiens (Human).